The chain runs to 91 residues: Succinate dehydrogenase assembly factor 1A, mitochondrial (91 aa).

Belongs to the complex I LYR family. SDHAF1 subfamily. In terms of assembly, interacts with the iron-sulfur protein subunit within the SDH catalytic dimer.

The protein resides in the mitochondrion matrix. In terms of biological role, plays an essential role in the assembly of succinate dehydrogenase (SDH), an enzyme complex (also referred to as respiratory complex II) that is a component of both the tricarboxylic acid (TCA) cycle and the mitochondrial electron transport chain, and which couples the oxidation of succinate to fumarate with the reduction of ubiquinone (coenzyme Q) to ubiquinol. Promotes maturation of the iron-sulfur protein subunit of the SDH catalytic dimer, protecting it from the deleterious effects of oxidants. May act together with SDHAF3. The protein is Succinate dehydrogenase assembly factor 1A, mitochondrial of Dictyostelium discoideum (Social amoeba).